We begin with the raw amino-acid sequence, 359 residues long: 4-dedimethylamino-4-oxo-anhydrotetracycline transaminase OxyQ (359 aa).

The substrate site is built by Gly-32, Lys-92, and Asn-155. Pyridoxal 5'-phosphate-binding positions include 91–92, Asn-155, Tyr-186, and 216–218; these read TK and SLS. Lys-219 carries the post-translational modification N6-(pyridoxal phosphate)lysine. Arg-227 contacts pyridoxal 5'-phosphate. Arg-341 contacts substrate.

The protein belongs to the class-I pyridoxal-phosphate-dependent aminotransferase family. The cofactor is pyridoxal 5'-phosphate.

It functions in the pathway antibiotic biosynthesis; oxytetracycline biosynthesis. Involved in the biosynthesis of the tetracycline antibiotic, oxytetracycline. Catalyzes the conversion of 4-dedimethylamino-4-oxoanhydrotetracycline to yield 4-amino-4-de(dimethylamino)anhydrotetracycline (4-amino-ATC). The protein is 4-dedimethylamino-4-oxo-anhydrotetracycline transaminase OxyQ of Streptomyces rimosus.